The chain runs to 1357 residues: DNA-directed RNA polymerase subunit beta (1357 aa).

It belongs to the RNA polymerase beta chain family. In terms of assembly, the RNAP catalytic core consists of 2 alpha, 1 beta, 1 beta' and 1 omega subunit. When a sigma factor is associated with the core the holoenzyme is formed, which can initiate transcription.

It carries out the reaction RNA(n) + a ribonucleoside 5'-triphosphate = RNA(n+1) + diphosphate. DNA-dependent RNA polymerase catalyzes the transcription of DNA into RNA using the four ribonucleoside triphosphates as substrates. This Nitrosomonas europaea (strain ATCC 19718 / CIP 103999 / KCTC 2705 / NBRC 14298) protein is DNA-directed RNA polymerase subunit beta.